A 284-amino-acid polypeptide reads, in one-letter code: D-tagatose-1,6-bisphosphate aldolase subunit GatY (284 aa).

Catalysis depends on aspartate 82, which acts as the Proton donor. 2 residues coordinate Zn(2+): histidine 83 and histidine 180. Residue glycine 181 participates in dihydroxyacetone phosphate binding. Residue histidine 208 participates in Zn(2+) binding. Dihydroxyacetone phosphate is bound by residues 209–211 and 230–233; these read GAS and NVAT.

This sequence belongs to the class II fructose-bisphosphate aldolase family. TagBP aldolase GatY subfamily. In terms of assembly, forms a complex with GatZ. Zn(2+) serves as cofactor.

The catalysed reaction is D-tagatofuranose 1,6-bisphosphate = D-glyceraldehyde 3-phosphate + dihydroxyacetone phosphate. It functions in the pathway carbohydrate metabolism; D-tagatose 6-phosphate degradation; D-glyceraldehyde 3-phosphate and glycerone phosphate from D-tagatose 6-phosphate: step 2/2. Its function is as follows. Catalytic subunit of the tagatose-1,6-bisphosphate aldolase GatYZ, which catalyzes the reversible aldol condensation of dihydroxyacetone phosphate (DHAP or glycerone-phosphate) with glyceraldehyde 3-phosphate (G3P) to produce tagatose 1,6-bisphosphate (TBP). Requires GatZ subunit for full activity and stability. Is involved in the catabolism of galactitol. This Salmonella paratyphi B (strain ATCC BAA-1250 / SPB7) protein is D-tagatose-1,6-bisphosphate aldolase subunit GatY.